Reading from the N-terminus, the 307-residue chain is Probable GTP 3',8-cyclase (307 aa).

One can recognise a Radical SAM core domain in the interval 5–227 (AYGRRISSLR…RRTKYYLGGA (223 aa)). Position 14 (R14) interacts with GTP. Residues C21 and C25 each coordinate [4Fe-4S] cluster. Y27 lines the S-adenosyl-L-methionine pocket. Residue C28 coordinates [4Fe-4S] cluster. Residue K61 participates in GTP binding. G65 is a binding site for S-adenosyl-L-methionine. Residue T89 participates in GTP binding. S113 is a binding site for S-adenosyl-L-methionine. GTP is bound at residue K151. Residues C241 and C244 each contribute to the [4Fe-4S] cluster site. A GTP-binding site is contributed by 246–248 (RLR). Residue C258 coordinates [4Fe-4S] cluster.

It belongs to the radical SAM superfamily. MoaA family. The cofactor is [4Fe-4S] cluster.

The catalysed reaction is GTP + AH2 + S-adenosyl-L-methionine = (8S)-3',8-cyclo-7,8-dihydroguanosine 5'-triphosphate + 5'-deoxyadenosine + L-methionine + A + H(+). The protein operates within cofactor biosynthesis; molybdopterin biosynthesis. In terms of biological role, catalyzes the cyclization of GTP to (8S)-3',8-cyclo-7,8-dihydroguanosine 5'-triphosphate. In Methanocella arvoryzae (strain DSM 22066 / NBRC 105507 / MRE50), this protein is Probable GTP 3',8-cyclase.